Here is a 49-residue protein sequence, read N- to C-terminus: Large ribosomal subunit protein bL33B (49 aa).

This sequence belongs to the bacterial ribosomal protein bL33 family.

This Bacillus anthracis protein is Large ribosomal subunit protein bL33B.